Consider the following 348-residue polypeptide: Phosphoribosylformylglycinamidine cyclo-ligase (348 aa).

The protein belongs to the AIR synthase family.

Its subcellular location is the cytoplasm. The catalysed reaction is 2-formamido-N(1)-(5-O-phospho-beta-D-ribosyl)acetamidine + ATP = 5-amino-1-(5-phospho-beta-D-ribosyl)imidazole + ADP + phosphate + H(+). Its pathway is purine metabolism; IMP biosynthesis via de novo pathway; 5-amino-1-(5-phospho-D-ribosyl)imidazole from N(2)-formyl-N(1)-(5-phospho-D-ribosyl)glycinamide: step 2/2. The polypeptide is Phosphoribosylformylglycinamidine cyclo-ligase (Aromatoleum aromaticum (strain DSM 19018 / LMG 30748 / EbN1) (Azoarcus sp. (strain EbN1))).